The sequence spans 514 residues: Peptide chain release factor 3 (514 aa).

Positions 8–268 (KKRRTFAIIS…IFLKFAPEPH (261 aa)) constitute a tr-type G domain. Residues 17–24 (SHPDAGKT), 85–89 (DTPGH), and 139–142 (NKLD) contribute to the GTP site.

The protein belongs to the TRAFAC class translation factor GTPase superfamily. Classic translation factor GTPase family. PrfC subfamily.

It is found in the cytoplasm. Functionally, increases the formation of ribosomal termination complexes and stimulates activities of RF-1 and RF-2. It binds guanine nucleotides and has strong preference for UGA stop codons. It may interact directly with the ribosome. The stimulation of RF-1 and RF-2 is significantly reduced by GTP and GDP, but not by GMP. This is Peptide chain release factor 3 from Streptococcus pneumoniae (strain CGSP14).